A 101-amino-acid chain; its full sequence is ATP-dependent Clp protease adapter protein ClpS (101 aa).

Belongs to the ClpS family. As to quaternary structure, binds to the N-terminal domain of the chaperone ClpA.

Its function is as follows. Involved in the modulation of the specificity of the ClpAP-mediated ATP-dependent protein degradation. This Mycobacterium bovis (strain ATCC BAA-935 / AF2122/97) protein is ATP-dependent Clp protease adapter protein ClpS.